Reading from the N-terminus, the 349-residue chain is Peroxidase 22 (349 aa).

The first 29 residues, 1–29 (MGFSPSFSCSAIGALILGCLLLQASNSNA), serve as a signal peptide directing secretion. Gln30 is modified (pyrrolidone carboxylic acid). 4 cysteine pairs are disulfide-bonded: Cys40–Cys120, Cys73–Cys78, Cys126–Cys329, and Cys206–Cys238. His71 acts as the Proton acceptor in catalysis. The Ca(2+) site is built by Asp72, Val75, Gly77, Asp79, and Ser81. An N-linked (GlcNAc...) asparagine glycan is attached at Asn86. Pro168 serves as a coordination point for substrate. N-linked (GlcNAc...) asparagine glycosylation is found at Asn173 and Asn187. His199 serves as a coordination point for heme b. Position 200 (Thr200) interacts with Ca(2+). N-linked (GlcNAc...) asparagine glycosylation is found at Asn217 and Asn243. The Ca(2+) site is built by Asp251, Thr254, and Asp259.

Belongs to the peroxidase family. Classical plant (class III) peroxidase subfamily. Heme b is required as a cofactor. It depends on Ca(2+) as a cofactor. Mainly expressed in roots.

The protein resides in the secreted. Its subcellular location is the vacuole. The catalysed reaction is 2 a phenolic donor + H2O2 = 2 a phenolic radical donor + 2 H2O. Functionally, removal of H(2)O(2), oxidation of toxic reductants, biosynthesis and degradation of lignin, suberization, auxin catabolism, response to environmental stresses such as wounding, pathogen attack and oxidative stress. These functions might be dependent on each isozyme/isoform in each plant tissue. In Arabidopsis thaliana (Mouse-ear cress), this protein is Peroxidase 22 (PER22).